The chain runs to 240 residues: Lipoprotein-releasing system ATP-binding protein LolD (240 aa).

Positions 15–240 (IRAESLGKTY…GLRELTSAEV (226 aa)) constitute an ABC transporter domain. 51-58 (GASGAGKS) contacts ATP.

This sequence belongs to the ABC transporter superfamily. Lipoprotein translocase (TC 3.A.1.125) family. In terms of assembly, the complex is composed of two ATP-binding proteins (LolD) and two transmembrane proteins (LolC and LolE).

It is found in the cell inner membrane. Its function is as follows. Part of the ABC transporter complex LolCDE involved in the translocation of mature outer membrane-directed lipoproteins, from the inner membrane to the periplasmic chaperone, LolA. Responsible for the formation of the LolA-lipoprotein complex in an ATP-dependent manner. The protein is Lipoprotein-releasing system ATP-binding protein LolD of Xylella fastidiosa (strain Temecula1 / ATCC 700964).